The following is a 375-amino-acid chain: Erythronate-4-phosphate dehydrogenase (375 aa).

The substrate site is built by serine 45 and threonine 66. NAD(+) contacts are provided by residues aspartate 146, threonine 175, 206-208 (ASR), and aspartate 232. Arginine 208 is an active-site residue. Glutamate 237 is a catalytic residue. Residue histidine 254 is the Proton donor of the active site. Glycine 257 is an NAD(+) binding site. Position 258 (tyrosine 258) interacts with substrate.

Belongs to the D-isomer specific 2-hydroxyacid dehydrogenase family. PdxB subfamily. Homodimer.

The protein resides in the cytoplasm. The enzyme catalyses 4-phospho-D-erythronate + NAD(+) = (R)-3-hydroxy-2-oxo-4-phosphooxybutanoate + NADH + H(+). It participates in cofactor biosynthesis; pyridoxine 5'-phosphate biosynthesis; pyridoxine 5'-phosphate from D-erythrose 4-phosphate: step 2/5. In terms of biological role, catalyzes the oxidation of erythronate-4-phosphate to 3-hydroxy-2-oxo-4-phosphonooxybutanoate. The chain is Erythronate-4-phosphate dehydrogenase from Photorhabdus laumondii subsp. laumondii (strain DSM 15139 / CIP 105565 / TT01) (Photorhabdus luminescens subsp. laumondii).